We begin with the raw amino-acid sequence, 1214 residues long: Brassinosteroid LRR receptor kinase BRL3 (1214 aa).

Positions 1-29 (MAAVRVVAPAPSVLLLVAAAVVLLHLARA) are cleaved as a signal peptide. An N-linked (GlcNAc...) asparagine glycan is attached at N61. The Cys pair 1 motif lies at 69–76 (CAWAGVSC). LRR repeat units follow at residues 103-127 (LSALRRLDLRGNAFHGDLSRHGSPR), 131-155 (PCALVEVDISSNTFNGTLPRAFLAS), 156-177 (CGGLQTLNLSRNSLTGGGYPFP), 178-202 (PSLRRLDMSRNQLSDAGLLNYSLTG), 204-228 (HGIQYLNLSANQFTGSLPGLAPCTE), 230-250 (SVLDLSWNLMSGVLPPRFVAM), 252-276 (PANLTYLSIAGNNFSMDISDYEFGG), 277-302 (CANLTLLDWSYNRLRSTGLPRSLVDC), 303-325 (RRLEALDMSGNKLLSGPIPTFLV), 327-351 (LQALRRLSLAGNRFTGEISDKLSIL), 353-375 (KTLVELDLSSNQLIGSLPASFGQ), 377-400 (RFLQVLDLGNNQLSGDFVETVITN), 401-427 (ISSLRVLRLPFNNITGANPLPALASRC), 429-451 (LLEVIDLGSNEFDGEIMPDLCSS), 452-476 (LPSLRKLLLPNNYINGTVPSSLSNC), 478-500 (NLESIDLSFNLLVGQIPPEILFL), 502-525 (KLVDLVLWANNLSGEIPDKFCFNS), 526-549 (TALETLVISYNSFTGNIPESITRC), 550-572 (VNLIWLSLAGNNLTGSIPSGFGN), 573-597 (LQNLAILQLNKNSLSGKVPAELGSC), 599-621 (NLIWLDLNSNELTGTIPPQLAAQ), and 650-673 (GVLFEFLDIRPDRLANFPAVHLCS). Residues N145, N163, N197, and N210 are each glycosylated (N-linked (GlcNAc...) asparagine). N-linked (GlcNAc...) asparagine glycosylation is found at N254, N264, and N279. N400 and N413 each carry an N-linked (GlcNAc...) asparagine glycan. An N-linked (GlcNAc...) asparagine glycan is attached at N466. N-linked (GlcNAc...) asparagine glycosylation is found at N512 and N524. The N-linked (GlcNAc...) asparagine glycan is linked to N561. Y678 is a brassinolide binding site. LRR repeat units follow at residues 689–712 (NGSMIFLDLSYNSLTGTIPASFGN), 713–736 (MTYLEVLNLGHNELTGAIPDAFTG), 738–760 (KGIGALDLSHNHLTGVIPPGFGC), and 762–786 (HFLADFDVSNNNLTGEIPTSGQLIT). The Cys pair 2 signature appears at 799 to 806 (CGIPLNPC). The chain crosses the membrane as a helical span at residues 829–849 (SVFLAVTLSVLILFSLLIIHY). Residues 913 to 1196 (FCAETLIGSG…FQVDSGSNFL (284 aa)) form the Protein kinase domain. ATP contacts are provided by residues 919 to 927 (IGSGGFGEV), K941, 987 to 989 (EYM), 993 to 996 (SLDF), 1039 to 1044 (DMKSSN), and D1057. The Proton acceptor role is filled by D1039.

The protein belongs to the protein kinase superfamily. Ser/Thr protein kinase family. In terms of tissue distribution, highly expressed in roots. Expressed at low levels in shoots.

Its subcellular location is the cell membrane. The enzyme catalyses L-seryl-[protein] + ATP = O-phospho-L-seryl-[protein] + ADP + H(+). It carries out the reaction L-threonyl-[protein] + ATP = O-phospho-L-threonyl-[protein] + ADP + H(+). Its function is as follows. May be involved in brassenosteroid (BR) perception in roots. The polypeptide is Brassinosteroid LRR receptor kinase BRL3 (Oryza sativa subsp. japonica (Rice)).